The sequence spans 359 residues: DNA-directed RNA polymerase RPB3-11 homolog (359 aa).

This sequence in the N-terminal section; belongs to the archaeal RpoD/eukaryotic RPB3 RNA polymerase subunit family. In the C-terminal section; belongs to the archaeal RpoL/eukaryotic RPB11/RPC19 RNA polymerase subunit family. Part of the viral DNA-directed RNA polymerase that consists of 8 polII-like subunits (RPB1, RPB2, RPB3, RPB5, RPB6, RPB7, RPB9, RPB10), a capping enzyme and a termination factor.

Its subcellular location is the host cytoplasm. It is found in the virion. Component of the DNA-directed RNA polymerase (RNAP) that catalyzes the transcription in the cytoplasm of viral DNA into RNA using the four ribonucleoside triphosphates as substrates. This is DNA-directed RNA polymerase RPB3-11 homolog from Ornithodoros (relapsing fever ticks).